A 284-amino-acid chain; its full sequence is 3-oxoadipate:acetyl-CoA acetyltransferase (284 aa).

Zn(2+)-binding residues include H47, H49, and E229.

Belongs to the BKACE family. The cofactor is Zn(2+).

It carries out the reaction 3-oxoadipate + acetyl-CoA = acetoacetate + succinyl-CoA. Catalyzes the condensation of 3-oxoadipate (beta-ketoadipate) and acetyl-CoA, forming acetoacetate and succinyl-CoA. Is likely involved is the degradation of 3-oxoadipate through an alternative pathway, within catechol degradation. This is 3-oxoadipate:acetyl-CoA acetyltransferase from Cupriavidus necator (strain ATCC 17699 / DSM 428 / KCTC 22496 / NCIMB 10442 / H16 / Stanier 337) (Ralstonia eutropha).